A 708-amino-acid polypeptide reads, in one-letter code: Lactotransferrin (708 aa).

A signal peptide spans 1 to 19 (MKLFFPALLSLGALGLCLA). 2 Transferrin-like domains span residues 25-352 (VRWC…GLRE) and 364-693 (VVWC…KLRR). 2 disulfide bridges follow: Cys-28–Cys-64 and Cys-38–Cys-55. The interval 44-51 (RMKKVRGP) is interaction with E.coli ompC. Fe(3+) is bound at residue Asp-79. Residue Lys-92 is part of the active site. Fe(3+) is bound at residue Tyr-111. 5 disulfides stabilise this stretch: Cys-134/Cys-217, Cys-176/Cys-192, Cys-179/Cys-202, Cys-189/Cys-200, and Cys-250/Cys-264. Thr-136, Arg-140, Ala-142, and Gly-143 together coordinate hydrogencarbonate. Tyr-211 is a binding site for Fe(3+). Asn-252 carries an N-linked (GlcNAc...) asparagine glycan. Fe(3+) is bound at residue His-272. Ser-278 (nucleophile) is an active-site residue. 2 disulfide bridges follow: Cys-367-Cys-399 and Cys-377-Cys-390. Residue Asn-385 is glycosylated (N-linked (GlcNAc...) asparagine). The Fe(3+) site is built by Asp-414 and Tyr-452. 8 disulfides stabilise this stretch: Cys-424-Cys-703, Cys-444-Cys-666, Cys-476-Cys-551, Cys-500-Cys-694, Cys-510-Cys-524, Cys-521-Cys-534, Cys-592-Cys-606, and Cys-644-Cys-649. Positions 478, 482, 484, and 485 each coordinate hydrogencarbonate. Asn-537 carries an N-linked (GlcNAc...) asparagine glycan. Position 545 (Tyr-545) interacts with Fe(3+). N-linked (GlcNAc...) asparagine glycosylation is present at Asn-594. His-614 lines the Fe(3+) pocket.

Belongs to the transferrin family. In terms of assembly, monomer. Found in a complex with LTF, CLU, EPPIN and SEMG1. Interacts with E.coli outer membrane protein C (OmpC). Found in a complex with MPO and LTF; interacts directly with CP, allows Fe(3+) incorporation into LTF and activation of CP ferroxidase activity. In terms of processing, poly-N-acetyllactosaminic carbohydrate moiety seems to be needed for TLR4 activation.

Its subcellular location is the secreted. It is found in the cytoplasmic granule. Functionally, transferrins are iron binding transport proteins which can bind two Fe(3+) ions in association with the binding of an anion, usually bicarbonate. Major iron-binding and multifunctional protein found in exocrine fluids such as breast milk and mucosal secretions. Has antimicrobial activity, which depends on the extracellular cation concentration. Antimicrobial properties include bacteriostasis, which is related to its ability to sequester free iron and thus inhibit microbial growth, as well as direct bactericidal properties leading to the release of lipopolysaccharides from the bacterial outer membrane. Can also prevent bacterial biofilm development in P.aeruginosa infection. Has weak antifungal activity against C.albicans. Has anabolic, differentiating and anti-apoptotic effects on osteoblasts and can also inhibit osteoclastogenesis, possibly playing a role in the regulation of bone growth. Promotes binding of species C adenoviruses to epithelial cells, promoting adenovirus infection. Can inhibit papillomavirus infections. Stimulates the TLR4 signaling pathway leading to NF-kappa-B activation and subsequent pro-inflammatory cytokine production while also interfering with the lipopolysaccharide (LPS)-stimulated TLR4 signaling. Inhibits neutrophil granulocyte migration to sites of apoptosis, when secreted by apoptotic cells. Stimulates VEGFA-mediated endothelial cell migration and proliferation. Binds heparin, chondroitin sulfate and possibly other glycosaminoglycans (GAGs). Also binds specifically to pneumococcal surface protein A (PspA), the lipid A portion of bacterial lipopolysaccharide (LPS), lysozyme and DNA. Its function is as follows. Lactoferricin binds to the bacterial surface and is crucial for the bactericidal functions. Has some antiviral activity against papillomavirus infection. N-terminal region shows strong antifungal activity against C.albicans. Contains two BBXB heparin-binding consensus sequences that appear to form the predominate functional GAG-binding site. In terms of biological role, the lactotransferrin transferrin-like domain 1 functions as a serine protease of the peptidase S60 family that cuts arginine rich regions. This function contributes to the antimicrobial activity. Shows a preferential cleavage at -Arg-Ser-Arg-Arg-|- and -Arg-Arg-Ser-Arg-|-, and of Z-Phe-Arg-|-aminomethylcoumarin sites. The protein is Lactotransferrin (LTF) of Camelus dromedarius (Dromedary).